Reading from the N-terminus, the 201-residue chain is 3-isopropylmalate dehydratase small subunit (201 aa).

Belongs to the LeuD family. LeuD type 1 subfamily. As to quaternary structure, heterodimer of LeuC and LeuD.

It carries out the reaction (2R,3S)-3-isopropylmalate = (2S)-2-isopropylmalate. Its pathway is amino-acid biosynthesis; L-leucine biosynthesis; L-leucine from 3-methyl-2-oxobutanoate: step 2/4. Functionally, catalyzes the isomerization between 2-isopropylmalate and 3-isopropylmalate, via the formation of 2-isopropylmaleate. The protein is 3-isopropylmalate dehydratase small subunit of Xanthobacter autotrophicus (strain ATCC BAA-1158 / Py2).